A 466-amino-acid chain; its full sequence is Rhodanese-like domain-containing protein 4, chloroplastic (466 aa).

The N-terminal 15 residues, 1–15, are a transit peptide targeting the chloroplast; that stretch reads MEALKTATFSPMSVL. The disordered stretch occupies residues 1-35; that stretch reads MEALKTATFSPMSVLSEKRSEPRKPFSLPNLFPPK. The transit peptide at 16–69 directs the protein to the thylakoid; the sequence is SEKRSEPRKPFSLPNLFPPKSQRPISQESFLKRFNGGLALLTSVLSSATAPAKS. The chain crosses the membrane as a helical span at residues 103-123; it reads PLVIAGGVAALAVPFVLSQVL. Residues 144-250 form the Rhodanese domain; it reads TDDNAQLLDI…WLNSSLPWIE (107 aa). A helical membrane pass occupies residues 277 to 297; the sequence is VSVALGVAAAAGLSVFAFTEI. Positions 373-384 are enriched in low complexity; the sequence is EAESATATTTTV. 2 disordered regions span residues 373 to 392 and 426 to 466; these read EAESATATTTTVDKPVPEPE and AQVI…PSQP. A compositionally biased stretch (pro residues) spans 455 to 466; sequence LKPPSSPMPSQP.

Component of high molecular weight thylakoid LFNRs-containing protein complexes containing LIR1, LFNR1, LFNR2, TIC62 and TROL proteins. Expressed in leaves and stems, and at lower levels in flowers and siliques (at protein level).

It localises to the plastid. Its subcellular location is the chloroplast envelope. It is found in the chloroplast thylakoid membrane. Functionally, rhodanese domain-containing protein required for anchoring ferredoxin--NADP reductase to the thylakoid membranes and sustaining efficient linear electron flow (LEF). The sequence is that of Rhodanese-like domain-containing protein 4, chloroplastic from Arabidopsis thaliana (Mouse-ear cress).